Here is a 200-residue protein sequence, read N- to C-terminus: Signal peptidase complex catalytic subunit SEC11 (200 aa).

Residues 1–15 are Cytoplasmic-facing; that stretch reads MFAELAPYLSNPRQT. The helical; Signal-anchor for type II membrane protein transmembrane segment at 16–33 threads the bilayer; that stretch reads LAQLLNFALVLSTAFMGW. Residues 34–200 lie on the Lumenal side of the membrane; that stretch reads KALSVYTNSS…MGVMVMLQRE (167 aa). The N-linked (GlcNAc...) asparagine glycan is linked to N41. Catalysis depends on charge relay system residues S53 and H92. The tract at residues 101–134 is disordered; the sequence is GDGGKKSQRRLEREADKRSGPGLSSPVSHQMLTK. The span at 103 to 119 shows a compositional bias: basic and acidic residues; sequence GGKKSQRRLEREADKRS. D142 functions as the Charge relay system in the catalytic mechanism. Residues 186-197 are C-terminal short (CTS) helix; that stretch reads VLLGIMGVMVML.

This sequence belongs to the peptidase S26B family. In terms of assembly, component of the signal peptidase complex (SPC) composed of a catalytic subunit SEC11 and three accessory subunits SPC1, SPC2 and SPC3. The complex induces a local thinning of the ER membrane which is used to measure the length of the signal peptide (SP) h-region of protein substrates. This ensures the selectivity of the complex towards h-regions shorter than 18-20 amino acids. SPC associates with the translocon complex.

It localises to the endoplasmic reticulum membrane. The enzyme catalyses Cleavage of hydrophobic, N-terminal signal or leader sequences from secreted and periplasmic proteins.. Its function is as follows. Catalytic component of the signal peptidase complex (SPC) which catalyzes the cleavage of N-terminal signal sequences from nascent proteins as they are translocated into the lumen of the endoplasmic reticulum. Specifically cleaves N-terminal signal peptides that contain a hydrophobic alpha-helix (h-region) shorter than 18-20 amino acids. The polypeptide is Signal peptidase complex catalytic subunit SEC11 (SEC11) (Arthroderma benhamiae (strain ATCC MYA-4681 / CBS 112371) (Trichophyton mentagrophytes)).